A 530-amino-acid chain; its full sequence is Sulfate adenylyltransferase (530 aa).

Residues 1–178 (MPIPAPHGGK…IQGLDYPTHY (178 aa)) form an N-terminal region. Positions 179–410 (DYIPFRKTPT…LRESNPPRSK (232 aa)) are catalytic. Sulfate is bound at residue Gln208. ATP contacts are provided by residues 208 to 211 (QTRN) and 304 to 307 (GRDH). Active-site residues include Thr209, Arg210, and Asn211. Position 210 (Arg210) interacts with sulfate. Ala308 provides a ligand contact to sulfate. Position 348 (Val348) interacts with ATP. Positions 411–530 (QGFAIVIDSS…LVSQGFYQQS (120 aa)) are required for oligomerization; adenylyl-sulfate kinase-like.

It belongs to the sulfate adenylyltransferase family. In terms of assembly, homohexamer. Dimer of trimers.

It localises to the cytoplasm. The catalysed reaction is sulfate + ATP + H(+) = adenosine 5'-phosphosulfate + diphosphate. The protein operates within sulfur metabolism; hydrogen sulfide biosynthesis; sulfite from sulfate: step 1/3. In terms of biological role, catalyzes the first intracellular reaction of sulfate assimilation, forming adenosine-5'-phosphosulfate (APS) from inorganic sulfate and ATP. Plays an important role in sulfate activation as a component of the biosynthesis pathway of sulfur-containing amino acids. In Debaryomyces hansenii (strain ATCC 36239 / CBS 767 / BCRC 21394 / JCM 1990 / NBRC 0083 / IGC 2968) (Yeast), this protein is Sulfate adenylyltransferase.